The sequence spans 186 residues: Adenylate kinase (186 aa).

Glycine 10–threonine 15 is an ATP binding site. Residues alanine 30–valine 55 form an NMP region. Residues threonine 31, arginine 36, glycine 53 to valine 55, glycine 81 to arginine 84, and glutamine 88 contribute to the AMP site. The LID stretch occupies residues alanine 122–aspartate 132. An ATP-binding site is contributed by arginine 123. Residues arginine 129 and arginine 140 each contribute to the AMP site. Lysine 168 contributes to the ATP binding site.

The protein belongs to the adenylate kinase family. In terms of assembly, monomer.

The protein resides in the cytoplasm. The catalysed reaction is AMP + ATP = 2 ADP. It functions in the pathway purine metabolism; AMP biosynthesis via salvage pathway; AMP from ADP: step 1/1. Functionally, catalyzes the reversible transfer of the terminal phosphate group between ATP and AMP. Plays an important role in cellular energy homeostasis and in adenine nucleotide metabolism. In Tropheryma whipplei (strain TW08/27) (Whipple's bacillus), this protein is Adenylate kinase.